Here is a 103-residue protein sequence, read N- to C-terminus: A-type ATP synthase subunit F (103 aa).

It belongs to the V-ATPase F subunit family. Has multiple subunits with at least A(3), B(3), C, D, E, F, H, I and proteolipid K(x).

It localises to the cell membrane. In terms of biological role, component of the A-type ATP synthase that produces ATP from ADP in the presence of a proton gradient across the membrane. The protein is A-type ATP synthase subunit F of Pyrococcus abyssi (strain GE5 / Orsay).